The sequence spans 442 residues: Betaine reductase complex component B subunit alpha (442 aa).

Heterotetramer of two alpha and two beta subunits. Component of the betaine reductase complex, together with components A and C. PB is substrate specific.

It catalyses the reaction acetyl phosphate + trimethylamine + [thioredoxin]-disulfide + H2O = glycine betaine + [thioredoxin]-dithiol + phosphate + H(+). In the first step of betaine reductase, the substrate is bound to component PB via a Schiff base intermediate. Then the PB-activated substrate is nucleophilically attacked by the selenol anion of component PA to transform it to a carboxymethylated selenoether and the respective amine. By action of component PC, acetyl phosphate is formed, leaving component PA in its oxidized state. Finally component PA becomes reduced by the thioredoxin system to start a new catalytic cycle of reductive deamination. The protein is Betaine reductase complex component B subunit alpha (grdI) of Peptoclostridium acidaminophilum (Eubacterium acidaminophilum).